The chain runs to 121 residues: MLRNTEYKQVIIVRTDIKMSKGKLAVQVAHAAVSAAFEAYKKKREWFLEWWATGQKKIVVKGGSERDLLKYAEMAKKKDLPVAIIRDAGLTELPPNTLTAVGIGPGPSRKIDEITGDLKLL.

The protein belongs to the PTH2 family.

It localises to the cytoplasm. It catalyses the reaction an N-acyl-L-alpha-aminoacyl-tRNA + H2O = an N-acyl-L-amino acid + a tRNA + H(+). Its function is as follows. The natural substrate for this enzyme may be peptidyl-tRNAs which drop off the ribosome during protein synthesis. This is Peptidyl-tRNA hydrolase from Staphylothermus marinus (strain ATCC 43588 / DSM 3639 / JCM 9404 / F1).